The primary structure comprises 416 residues: UDP-N-acetylglucosamine 1-carboxyvinyltransferase (416 aa).

22–23 lines the phosphoenolpyruvate pocket; it reads KN. UDP-N-acetyl-alpha-D-glucosamine is bound at residue Arg-92. Cys-116 serves as the catalytic Proton donor. At Cys-116 the chain carries 2-(S-cysteinyl)pyruvic acid O-phosphothioketal. UDP-N-acetyl-alpha-D-glucosamine contacts are provided by residues 121-125, Asp-304, and Ile-326; that span reads RPVDQ.

It belongs to the EPSP synthase family. MurA subfamily.

The protein localises to the cytoplasm. It carries out the reaction phosphoenolpyruvate + UDP-N-acetyl-alpha-D-glucosamine = UDP-N-acetyl-3-O-(1-carboxyvinyl)-alpha-D-glucosamine + phosphate. The protein operates within cell wall biogenesis; peptidoglycan biosynthesis. Cell wall formation. Adds enolpyruvyl to UDP-N-acetylglucosamine. This is UDP-N-acetylglucosamine 1-carboxyvinyltransferase from Aromatoleum aromaticum (strain DSM 19018 / LMG 30748 / EbN1) (Azoarcus sp. (strain EbN1)).